The sequence spans 1010 residues: Sodium/potassium-transporting ATPase subunit alpha-3 (1010 aa).

The segment at 1–21 (MGDKDDRFPKKKKGGTKDMDA) is disordered. At 1–74 (MGDKDDRFPK…NALTPPPTTP (74 aa)) the chain is on the cytoplasmic side. An interaction with phosphoinositide-3 kinase region spans residues 69–71 (PPP). The helical transmembrane segment at 75-95 (EWVKFCRQLFGGFSILLWTGA) threads the bilayer. Over 96-118 (ILCFLAYAIQAATEDEPAGDNLY) the chain is Extracellular. A helical transmembrane segment spans residues 119–139 (LGIVLTAVVVITGCFSYFQEA). Residues 140 to 275 (KSSKIMESFK…TGKTPIAVEI (136 aa)) lie on the Cytoplasmic side of the membrane. Residues 201 to 216 (DNSSLTGESEPQSRSP) show a composition bias toward polar residues. Positions 201 to 221 (DNSSLTGESEPQSRSPDCTHD) are disordered. The chain crosses the membrane as a helical span at residues 276-295 (EHFIHIITGVAVFLGVTFFI). The Extracellular portion of the chain corresponds to 296 to 307 (LAIILGYTWLKA). Residues 308–325 (VIFLIGIIVANVPEGLLA) form a helical membrane-spanning segment. Residues 326-759 (TVTVCLTLTA…EEGRLIFDNL (434 aa)) lie on the Cytoplasmic side of the membrane. The active-site 4-aspartylphosphate intermediate is D363. Mg(2+) contacts are provided by D704 and D708. The chain crosses the membrane as a helical span at residues 760–779 (KKSIAYTLTSNIPEITPFLF). Residues 780 to 789 (FIIVNIPLAL) lie on the Extracellular side of the membrane. Residues 790 to 810 (GTITILCIDLGTDMGSAISLA) form a helical membrane-spanning segment. Residues 811–830 (YETAESDIMKRQPRNPCRDK) are Cytoplasmic-facing. The chain crosses the membrane as a helical span at residues 831–853 (LVNERLISIAYGQIGMIQALGGF). At 854–905 (FSYFVILAENGFLPSQLVGIRLNWDDRSLNDLEDSYGQQWTYEQRKIVEFTC) the chain is on the extracellular side. Residues 906-925 (HTAFFVSIVVVQWADLIICK) traverse the membrane as a helical segment. At 926–938 (TRRNSVFQQGMKN) the chain is on the cytoplasmic side. At S930 the chain carries Phosphoserine; by PKA. A helical transmembrane segment spans residues 939–957 (KILIFGLFEETALAAFLSY). Residues 958 to 972 (CPGMDVALRMYPLKP) are Extracellular-facing. A helical membrane pass occupies residues 973-993 (TWWFWAFPYSFLIFVYDEARK). Topologically, residues 994–1010 (LILCRNPGGWVEKETYY) are cytoplasmic.

The protein belongs to the cation transport ATPase (P-type) (TC 3.A.3) family. Type IIC subfamily. In terms of assembly, the sodium/potassium-transporting ATPase is composed of a catalytic alpha subunit, an auxiliary non-catalytic beta subunit and an additional regulatory subunit.

It is found in the cell membrane. It catalyses the reaction K(+)(out) + Na(+)(in) + ATP + H2O = K(+)(in) + Na(+)(out) + ADP + phosphate + H(+). Functionally, this is the catalytic component of the active enzyme, which catalyzes the hydrolysis of ATP coupled with the exchange of sodium and potassium ions across the plasma membrane. This action creates the electrochemical gradient of sodium and potassium ions, providing the energy for active transport of various nutrients. The sequence is that of Sodium/potassium-transporting ATPase subunit alpha-3 (atp1a3) from Oreochromis mossambicus (Mozambique tilapia).